A 424-amino-acid polypeptide reads, in one-letter code: uncharacterized protein (424 aa).

11 helical membrane passes run 9 to 29 (ITWI…GILI), 41 to 61 (ASLF…GTLA), 86 to 106 (GAIL…IIAL), 119 to 139 (ADWQ…LLHM), 148 to 168 (ISTL…AVSL), 184 to 204 (WSAA…WEMI), 222 to 242 (LFLA…VTVG), 270 to 290 (VTVC…IAGF), 320 to 340 (VLTA…LFQI), 345 to 365 (LLKG…AAAL), and 377 to 397 (MALG…WALL).

Belongs to the amino acid-polyamine-organocation (APC) superfamily.

Its subcellular location is the cell membrane. This is an uncharacterized protein from Bacillus subtilis (strain 168).